The sequence spans 509 residues: Citrinin biosynthesis transcriptional activator mrl3 (509 aa).

Residues 1-22 (MASTAHRQPSRPTTRQRQRTGR) are disordered. The segment at residues 24-51 (CEECRRRKLRCDGQQPRCGVCVDSGVTC) is a DNA-binding region (zn(2)-C6 fungal-type). A disordered region spans residues 97-143 (STPLTNDHHDGCSVSSASSRSDSNPPPTVSEPDMSLPNTTTSVSSAP). Low complexity predominate over residues 109–119 (SVSSASSRSDS). The segment covering 132–143 (LPNTTTSVSSAP) has biased composition (polar residues).

It localises to the nucleus. Transcription factor that regulates the expression of the gene cluster that mediates the biosynthesis of the mycotoxin citrinin, a hepato-nephrotoxic compound to humans due to inhibition of respiration complex III. The polypeptide is Citrinin biosynthesis transcriptional activator mrl3 (Monascus ruber (Mold)).